We begin with the raw amino-acid sequence, 64 residues long: Large ribosomal subunit protein bL35 (64 aa).

2 disordered regions span residues 1–20 (MPKAKTHSGASKRFRRTGTG) and 37–64 (PTKRTRRLAGRTQVSANDAPRINKMLNG).

It belongs to the bacterial ribosomal protein bL35 family.

The sequence is that of Large ribosomal subunit protein bL35 from Mycobacterium sp. (strain JLS).